A 253-amino-acid polypeptide reads, in one-letter code: Ubiquinone/menaquinone biosynthesis C-methyltransferase UbiE (253 aa).

Residues Thr76, Asp97, and 125–126 (NA) contribute to the S-adenosyl-L-methionine site.

This sequence belongs to the class I-like SAM-binding methyltransferase superfamily. MenG/UbiE family.

The enzyme catalyses a 2-demethylmenaquinol + S-adenosyl-L-methionine = a menaquinol + S-adenosyl-L-homocysteine + H(+). The catalysed reaction is a 2-methoxy-6-(all-trans-polyprenyl)benzene-1,4-diol + S-adenosyl-L-methionine = a 5-methoxy-2-methyl-3-(all-trans-polyprenyl)benzene-1,4-diol + S-adenosyl-L-homocysteine + H(+). It functions in the pathway quinol/quinone metabolism; menaquinone biosynthesis; menaquinol from 1,4-dihydroxy-2-naphthoate: step 2/2. It participates in cofactor biosynthesis; ubiquinone biosynthesis. Methyltransferase required for the conversion of demethylmenaquinol (DMKH2) to menaquinol (MKH2) and the conversion of 2-polyprenyl-6-methoxy-1,4-benzoquinol (DDMQH2) to 2-polyprenyl-3-methyl-6-methoxy-1,4-benzoquinol (DMQH2). In Stenotrophomonas maltophilia (strain R551-3), this protein is Ubiquinone/menaquinone biosynthesis C-methyltransferase UbiE.